The chain runs to 231 residues: NADH-ubiquinone oxidoreductase chain 4 (231 aa).

6 helical membrane passes run 1–21 (PIAG…YGII), 34–54 (MFLP…LTCL), 63–85 (IAYS…TPWG), 89–111 (AMAL…NTTY), 118–138 (ILIL…WWLL), and 169–189 (TIIL…HMFL).

This sequence belongs to the complex I subunit 4 family.

It is found in the mitochondrion membrane. The catalysed reaction is a ubiquinone + NADH + 5 H(+)(in) = a ubiquinol + NAD(+) + 4 H(+)(out). Core subunit of the mitochondrial membrane respiratory chain NADH dehydrogenase (Complex I) that is believed to belong to the minimal assembly required for catalysis. Complex I functions in the transfer of electrons from NADH to the respiratory chain. The immediate electron acceptor for the enzyme is believed to be ubiquinone. This is NADH-ubiquinone oxidoreductase chain 4 (MT-ND4) from Trimeresurus cantori (Cantor's pit viper).